Consider the following 972-residue polypeptide: FHF complex subunit HOOK-interacting protein 1B (972 aa).

Disordered stretches follow at residues alanine 465 to glutamate 548 and serine 573 to glutamate 644. Serine 467 is subject to Phosphoserine. The span at arginine 478–arginine 501 shows a compositional bias: low complexity. Phosphoserine occurs at positions 510, 523, 529, and 533. Residues serine 523–glycine 535 are compositionally biased toward low complexity. Phosphoserine occurs at positions 859 and 897.

Belongs to the FHIP family. In terms of assembly, component of the FTS/Hook/FHIP complex (FHF complex), composed of AKTIP/FTS, FHIP1B, and one or more members of the Hook family of proteins HOOK1, HOOK2, and HOOK3. The FHF complex associates with the homotypic vesicular sorting complex (the HOPS complex).

In terms of biological role, component of the FTS/Hook/FHIP complex (FHF complex). The FHF complex may function to promote vesicle trafficking and/or fusion via the homotypic vesicular protein sorting complex (the HOPS complex). FHF complex promotes the distribution of AP-4 complex to the perinuclear area of the cell. This Homo sapiens (Human) protein is FHF complex subunit HOOK-interacting protein 1B.